The following is a 692-amino-acid chain: Epithelial sodium channel subunit alpha (692 aa).

Residues 1–67 (MSSIKGNKLE…PAAPQQPTAE (67 aa)) are disordered. The Cytoplasmic segment spans residues 1 to 108 (MSSIKGNKLE…CSQHNRMKTA (108 aa)). The segment covering 56–65 (PEPAAPQQPT) has biased composition (low complexity). Residues 109–129 (FWAVLWLCTFGMMYWQFGLLF) form a helical membrane-spanning segment. Topologically, residues 130–585 (GEYFSYPVSL…SQWSLWFGSS (456 aa)) are extracellular. 10 disulfide bridges follow: Cys-156–Cys-328, Cys-252–Cys-259, Cys-305–Cys-312, Cys-417–Cys-502, Cys-439–Cys-479, Cys-439–Cys-498, Cys-443–Cys-494, Cys-452–Cys-479, Cys-452–Cys-502, and Cys-454–Cys-468. A gating release of inhibition by proteolysis (GRIP); protease-sensitive region that is responsible for the proteolytic activation of the channel region spans residues 198 to 266 (RSRRDLRGTL…SDCFYQTYSS (69 aa)). Residues 586–606 (VLSVVEMAELIFDLLVITFLM) traverse the membrane as a helical segment. Residues 607–692 (LLRRFRSRYW…GSSACPLGGP (86 aa)) lie on the Cytoplasmic side of the membrane. A disordered region spans residues 627–692 (EVASTLASSP…GSSACPLGGP (66 aa)). Positions 628–637 (VASTLASSPP) are enriched in polar residues. Positions 653 to 666 (GPAPSPALTAPPPA) are enriched in pro residues. The PY motif; recruits WW domain-containing proteins and is thereby required for ubiquitination and inhibition of the channel by NEDD4 and NEDD4L motif lies at 663–667 (PPPAY). The segment covering 682-692 (AGSSACPLGGP) has biased composition (low complexity).

Belongs to the amiloride-sensitive sodium channel (TC 1.A.6) family. SCNN1A subfamily. As to quaternary structure, heterotrimer; containing an alpha/SCNN1A, a beta/SCNN1B and a gamma/SCNN1G subunit. Interacts with WWP1 (via WW domains). Interacts with WWP2 (via WW domains); inhibits the channel. Interacts with BPIFA1; the interaction is indirect via SCNN1B and inhibits the proteolytic processing of SCNN1A and SCNN1G and the activation of ENaC. Interacts with the full-length immature form of PCSK9 (pro-PCSK9). In terms of processing, ubiquitinated. Can be ubiquitinated at multiple sites and undergo monoubiquitination and polyubiquitination. Ubiquitination by NEDD4 or NEDD4L inhibits the ENaC channel through endocytosis, intracellular retention and degradation of its individual subunits. N-glycosylated. Post-translationally, ENaC is activated through the proteolytic maturation of its subunits. Furin cleaves the SCNN1A subunit, which results in a stepwise increase in the open probability of the channel due to the release of an inhibitory tract. BPIFA1, which is recruited by the SCNN1B subunit, prevents the proteolytic activation of ENaC.

It is found in the apical cell membrane. The protein resides in the cell projection. Its subcellular location is the cilium. It localises to the cytoplasmic granule. The protein localises to the cytoplasm. It is found in the cytoplasmic vesicle. The protein resides in the secretory vesicle. Its subcellular location is the acrosome. It localises to the flagellum. It carries out the reaction Na(+)(in) = Na(+)(out). Originally identified and characterized by its inhibition by the diuretic drug amiloride. In terms of biological role, this is one of the three pore-forming subunits of the heterotrimeric epithelial sodium channel (ENaC), a critical regulator of sodium balance and fluid homeostasis. ENaC operates in epithelial tissues, where it mediates the electrodiffusion of sodium ions from extracellular fluid through the apical membrane of cells, with water following osmotically. It plays a key role in maintaining sodium homeostasis through electrogenic sodium reabsorption in the kidneys. Additionally, ENaC is essential for airway surface liquid homeostasis, which is crucial for proper mucus clearance. The polypeptide is Epithelial sodium channel subunit alpha (Pan troglodytes (Chimpanzee)).